A 541-amino-acid polypeptide reads, in one-letter code: Mesoderm induction early response protein 2 (541 aa).

Serine 11 carries the post-translational modification Phosphoserine. 2 disordered regions span residues 100-119 (DPIS…LPDM) and 131-186 (LSGE…EEDA). Positions 140–165 (QSSADDLTPSVTSHEASDLFHNQSGS) are enriched in polar residues. An ELM2 domain is found at 194–291 (KEIMVGPQFQ…EALRRLRFNV (98 aa)). One can recognise an SANT domain in the interval 296-348 (DGLCAWSEEECRNFEHGFRVHGKNFHLIQANKVRTRSVGECVEYYYLWKKSER). Residues 364–440 (VSSGTTDTEQ…EPPAVPSLQQ (77 aa)) are disordered.

Part of a complex containing at least CDYL, MIER1, MIER2, HDAC1 and HDAC2.

The protein resides in the nucleus. Functionally, transcriptional repressor. The protein is Mesoderm induction early response protein 2 (Mier2) of Mus musculus (Mouse).